The primary structure comprises 151 residues: Large ribosomal subunit protein uL13 (151 aa).

Positions 126–151 (YPGSNHPHEAQKPEKLTIQTIPGGER) are disordered. Residues 131–140 (HPHEAQKPEK) are compositionally biased toward basic and acidic residues.

This sequence belongs to the universal ribosomal protein uL13 family. Part of the 50S ribosomal subunit.

This protein is one of the early assembly proteins of the 50S ribosomal subunit, although it is not seen to bind rRNA by itself. It is important during the early stages of 50S assembly. This Trichodesmium erythraeum (strain IMS101) protein is Large ribosomal subunit protein uL13.